Here is a 268-residue protein sequence, read N- to C-terminus: Type III pantothenate kinase (268 aa).

6–13 (DVGNTNIV) serves as a coordination point for ATP. Residues Y100 and 107–110 (GADR) each bind substrate. D109 acts as the Proton acceptor in catalysis. K(+) is bound at residue D129. Residue T132 coordinates ATP. T184 contributes to the substrate binding site.

This sequence belongs to the type III pantothenate kinase family. As to quaternary structure, homodimer. Requires NH4(+) as cofactor. K(+) is required as a cofactor.

It localises to the cytoplasm. It carries out the reaction (R)-pantothenate + ATP = (R)-4'-phosphopantothenate + ADP + H(+). It participates in cofactor biosynthesis; coenzyme A biosynthesis; CoA from (R)-pantothenate: step 1/5. Functionally, catalyzes the phosphorylation of pantothenate (Pan), the first step in CoA biosynthesis. The sequence is that of Type III pantothenate kinase from Alkaliphilus metalliredigens (strain QYMF).